A 299-amino-acid polypeptide reads, in one-letter code: Tyrosine recombinase XerC (299 aa).

Positions 1 to 85 (MDQHLDAYCM…AVRGFYKYLN (85 aa)) constitute a Core-binding (CB) domain. Positions 106-285 (RLPKTLDTDR…DFQHLATVYD (180 aa)) constitute a Tyr recombinase domain. Residues arginine 146, lysine 170, histidine 237, arginine 240, and histidine 263 contribute to the active site. Tyrosine 272 functions as the O-(3'-phospho-DNA)-tyrosine intermediate in the catalytic mechanism.

It belongs to the 'phage' integrase family. XerC subfamily. Forms a cyclic heterotetrameric complex composed of two molecules of XerC and two molecules of XerD.

The protein localises to the cytoplasm. Its function is as follows. Site-specific tyrosine recombinase, which acts by catalyzing the cutting and rejoining of the recombining DNA molecules. The XerC-XerD complex is essential to convert dimers of the bacterial chromosome into monomers to permit their segregation at cell division. It also contributes to the segregational stability of plasmids. In Pseudomonas syringae pv. syringae (strain B728a), this protein is Tyrosine recombinase XerC.